The sequence spans 504 residues: uncharacterized protein (504 aa).

Disordered regions lie at residues 1-59 (MSSS…KNEY) and 171-255 (GVNS…NQRL). Basic and acidic residues-rich tracts occupy residues 36-50 (KPID…KEIG) and 199-212 (RAET…ESRQ). Polar residues predominate over residues 213-232 (SNRGNNDNGDQRMTSKATTR).

This is an uncharacterized protein from Caenorhabditis elegans.